The primary structure comprises 774 residues: MAFSPWQILSPVQWAKWTWSAVRGSGAGEDEAGGPEGDPEEEEDSQAETKSLSFSSDSEGNFETPEAETPIRSPLKESCDSSPGLAEPEAKPQESREADEQLVAEVIEKCSPDTCSRSSENEAPQATVDSHPVKDVRGKAEHDVSKISVVRPFSIETRNCTDDPAALGTAAAHGCVPVLPGMALPSTTPEATQDEPVMDRGMGVTLEAFTEASLKTGGPCPEPVASRSKLRKPKPVSLRKKMAPEPEMLMEGSPLPKASSPWLPDGLDQNANPSVLRGSGAQRSPLNLKETAGVLSNDTSDSGVEVAPGSPPLQLEDDFTEDGENVKIRSALPKQSGRKPSNKLAPSIRKDGVSKPVGVEQPSDPTVQDALLDQMSPKLDPSKRSHPPANFFGSGPILQNSPPLSSKCSHHFDPNNINTDDSGDPCKPTPALTSSGFCPATGNHVNEILDSPKKAKSRLITSGCKVKKYEAQPLDLDACSQDEGAVISKISEIPNRDGHATDEEKLASTSSCAQKSAGAGVKGIEKETCQKMEKEELAVHGLLESSSEKAPVSVACGGESPLDGICLSEADKTAVLTLIREEIITKEIEANEWKKKYEETREEVLEMRKIVAEYEKTIAQMIEDEQRTSMSSQKSFQQLTMEKEQALADLNSVERSLSDLFRRYENLKGVLEGFKKNEEALKKCAQDYLARVKQEEQRYQALKVHAEEKLDRANEEIAQVRSKAKAESAALHAGLRKEQMKVESLERALQQKNQEIEELTKICDELIAKLGKTD.

Ala-2 carries the N-acetylalanine modification. Positions 2–56 (AFSPWQILSPVQWAKWTWSAVRGSGAGEDEAGGPEGDPEEEEDSQAETKSLSFSS) are interaction with LSM7 and SNRPG. Phosphoserine occurs at positions 4, 10, and 45. The tract at residues 21–142 (AVRGSGAGED…VKDVRGKAEH (122 aa)) is disordered. Positions 28–46 (GEDEAGGPEGDPEEEEDSQ) are enriched in acidic residues. Positions 48–61 (ETKSLSFSSDSEGN) are enriched in polar residues. A compositionally biased stretch (basic and acidic residues) spans 88-99 (PEAKPQESREAD). Polar residues predominate over residues 113-128 (DTCSRSSENEAPQATV). Basic and acidic residues predominate over residues 131–142 (HPVKDVRGKAEH). Ser-148 and Ser-154 each carry phosphoserine. An interaction with TDRD7 region spans residues 153-255 (FSIETRNCTD…PEMLMEGSPL (103 aa)). The tract at residues 207–424 (EAFTEASLKT…NNINTDDSGD (218 aa)) is interaction with YEATS4. Positions 214–428 (LKTGGPCPEP…TDDSGDPCKP (215 aa)) are disordered. 2 SPAZ domains span residues 216–294 (TGGP…TAGV) and 354–504 (SKPV…TDEE). Phosphoserine; by AURKC is present on Ser-228. Residues 228–241 (SKLRKPKPVSLRKK) show a composition bias toward basic residues. Phosphoserine is present on residues Ser-376 and Ser-401. Positions 397-407 (ILQNSPPLSSK) are enriched in polar residues. The short motif at 452–468 (PKKAKSRLITSGCKVKK) is the Bipartite nuclear localization signal element. 2 positions are modified to phosphoserine: Ser-480 and Ser-560. The stretch at 579–774 (IREEIITKEI…ELIAKLGKTD (196 aa)) forms a coiled coil. Residues 670–774 (VLEGFKKNEE…ELIAKLGKTD (105 aa)) are interaction with CH-TOG.

The protein belongs to the TACC family. Interacts with CH-TOG and YEATS4. Interacts with the AURKA and AURKB and AURKC. Interacts with LSM7, TDRD7 and SNRPG. Interacts with GCN5L2 and PCAF. Interacts with the thyroid hormone receptors THRB and THRA, predominantly with isoform alpha-2. The interaction with THRA isoform alpha-1 and THRB is decreased in the presence of thyroid hormone T3. Interacts with RARA in the nucleus. Also interacts with other nuclear receptors, including ESR1, NR3C1, PPARG and RXRA, preferentially in the absence of their hormonal ligands.

The protein resides in the cytoplasm. The protein localises to the nucleus. It is found in the cytoskeleton. Its subcellular location is the microtubule organizing center. It localises to the centrosome. The protein resides in the midbody. Its function is as follows. Involved in transcription regulation induced by nuclear receptors, including in T3 thyroid hormone and all-trans retinoic acid pathways. Might promote the nuclear localization of the receptors. Likely involved in the processes that promote cell division prior to the formation of differentiated tissues. In Mus musculus (Mouse), this protein is Transforming acidic coiled-coil-containing protein 1 (Tacc1).